The chain runs to 118 residues: Class II hydrophobin CRP (118 aa).

The first 22 residues, 1–22 (MQFSIIAISFLASLAMASPAKR), serve as a signal peptide directing secretion. Residues 20-46 (AKRGGGGGGSGSGSGSGSGSGSGGGST) form a disordered region. The span at 22-45 (RGGGGGGSGSGSGSGSGSGSGGGS) shows a compositional bias: gly residues. A run of 7 repeats spans residues 29–30 (SG), 31–32 (SG), 33–34 (SG), 35–36 (SG), 37–38 (SG), 39–40 (SG), and 41–42 (SG). The segment at 29–42 (SGSGSGSGSGSGSG) is 7 X 2 AA tandem repeats of S-G. Disulfide bonds link Cys51–Cys100, Cys61–Cys91, Cys62–Cys74, and Cys101–Cys112.

It belongs to the cerato-ulmin hydrophobin family. Homotetramer. Further self-assembles to form highly ordered films at water-air interfaces through intermolecular interactions.

The protein localises to the secreted. Its subcellular location is the cell wall. In terms of biological role, aerial growth, conidiation, and dispersal of filamentous fungi in the environment rely upon a capability of their secreting small amphipathic proteins called hydrophobins (HPBs) with low sequence identity. Class I can self-assemble into an outermost layer of rodlet bundles on aerial cell surfaces, conferring cellular hydrophobicity that supports fungal growth, development and dispersal; whereas Class II form highly ordered films at water-air interfaces through intermolecular interactions but contribute nothing to the rodlet structure. Cryparin is a class II hydrophobin that is the most abundant protein produced by this fungus when grown in liquid culture and that plays an essential role in the fitness of this important plant pathogen by facilitating the eruption of the fungal fruiting bodies through the bark of its host tree. The sequence is that of Class II hydrophobin CRP from Cryphonectria parasitica (Chestnut blight fungus).